A 117-amino-acid chain; its full sequence is Large ribosomal subunit protein uL22 (117 aa).

This sequence belongs to the universal ribosomal protein uL22 family. In terms of assembly, part of the 50S ribosomal subunit.

Functionally, this protein binds specifically to 23S rRNA; its binding is stimulated by other ribosomal proteins, e.g. L4, L17, and L20. It is important during the early stages of 50S assembly. It makes multiple contacts with different domains of the 23S rRNA in the assembled 50S subunit and ribosome. In terms of biological role, the globular domain of the protein is located near the polypeptide exit tunnel on the outside of the subunit, while an extended beta-hairpin is found that lines the wall of the exit tunnel in the center of the 70S ribosome. This is Large ribosomal subunit protein uL22 from Leptospira biflexa serovar Patoc (strain Patoc 1 / ATCC 23582 / Paris).